The primary structure comprises 79 residues: uncharacterized protein (79 aa).

The tract at residues 51–79 (PAQFPKVQRPPTLLGGKNTSTQTTLHPVI) is disordered. Residues 67-79 (KNTSTQTTLHPVI) are compositionally biased toward polar residues.

This is an uncharacterized protein from Homo sapiens (Human).